Here is a 380-residue protein sequence, read N- to C-terminus: DNA primase small subunit PriS (380 aa).

Residues D101, D103, and D282 contribute to the active site.

This sequence belongs to the eukaryotic-type primase small subunit family. Heterodimer of a small subunit (PriS) and a large subunit (PriL). Mg(2+) serves as cofactor. The cofactor is Mn(2+).

Catalytic subunit of DNA primase, an RNA polymerase that catalyzes the synthesis of short RNA molecules used as primers for DNA polymerase during DNA replication. The small subunit contains the primase catalytic core and has DNA synthesis activity on its own. Binding to the large subunit stabilizes and modulates the activity, increasing the rate of DNA synthesis while decreasing the length of the DNA fragments, and conferring RNA synthesis capability. The DNA polymerase activity may enable DNA primase to also catalyze primer extension after primer synthesis. May also play a role in DNA repair. This is DNA primase small subunit PriS from Hyperthermus butylicus (strain DSM 5456 / JCM 9403 / PLM1-5).